A 198-amino-acid chain; its full sequence is Elongation factor Ts (198 aa).

The tract at residues 81-84 (TDFV) is involved in Mg(2+) ion dislocation from EF-Tu.

It belongs to the EF-Ts family.

It is found in the cytoplasm. Associates with the EF-Tu.GDP complex and induces the exchange of GDP to GTP. It remains bound to the aminoacyl-tRNA.EF-Tu.GTP complex up to the GTP hydrolysis stage on the ribosome. This Herpetosiphon aurantiacus (strain ATCC 23779 / DSM 785 / 114-95) protein is Elongation factor Ts.